The following is a 290-amino-acid chain: Ribonuclease 3 (290 aa).

Residues 20 to 145 (YSCFYRILGF…FIGAIYLDRG (126 aa)) enclose the RNase III domain. Glutamate 62 is a binding site for Mg(2+). Aspartate 66 is an active-site residue. Residues asparagine 131 and glutamate 134 each contribute to the Mg(2+) site. Residue glutamate 134 is part of the active site. The DRBM domain occupies 173-242 (NFKSKLIEWS…AQMTLKKIKG (70 aa)). The disordered stretch occupies residues 254–290 (KTQNNVPAEDTTPESETSLTAENQQIDEIISTEEISV). A compositionally biased stretch (polar residues) spans 267 to 279 (ESETSLTAENQQI).

This sequence belongs to the ribonuclease III family. As to quaternary structure, homodimer. Mg(2+) serves as cofactor.

It is found in the cytoplasm. It catalyses the reaction Endonucleolytic cleavage to 5'-phosphomonoester.. In terms of biological role, digests double-stranded RNA. Involved in the processing of primary rRNA transcript to yield the immediate precursors to the large and small rRNAs (23S and 16S). Processes some mRNAs, and tRNAs when they are encoded in the rRNA operon. Processes pre-crRNA and tracrRNA of type II CRISPR loci if present in the organism. The protein is Ribonuclease 3 of Bacteroides fragilis (strain ATCC 25285 / DSM 2151 / CCUG 4856 / JCM 11019 / LMG 10263 / NCTC 9343 / Onslow / VPI 2553 / EN-2).